The primary structure comprises 172 residues: Mitochondrial import inner membrane translocase subunit Tim17-B (172 aa).

Cysteine 9 and cysteine 78 are joined by a disulfide. A run of 3 helical transmembrane segments spans residues 17–37 (CGGA…IKGF), 61–77 (QIGG…STID), and 113–133 (VGSA…GILL). A disordered region spans residues 147–172 (FLEDPSQLTPKEGSPAPGYPNYQQYH).

The protein belongs to the Tim17/Tim22/Tim23 family. Component of the TIM23 complex at least composed of TIMM23, TIMM17 (TIMM17A or TIMM17B) and TIMM50. The complex interacts with the TIMM44 component of the PAM complex. The complex also interacts with DNAJC15.

Its subcellular location is the mitochondrion inner membrane. In terms of biological role, essential component of the TIM23 complex, a complex that mediates the translocation of transit peptide-containing proteins across the mitochondrial inner membrane. This is Mitochondrial import inner membrane translocase subunit Tim17-B (Timm17b) from Mus musculus (Mouse).